A 203-amino-acid chain; its full sequence is Glycerol-3-phosphate acyltransferase (203 aa).

5 helical membrane passes run 10–30 (LLLGLTALLAYLLGSVPFGIM), 60–80 (LAAFLTLVLDAGKGAIAVFLA), 88–108 (AAQLAGFAAFLGHCFPVFLGF), 118–138 (LGTLLALAWPIGLAACAIWAI), and 162–182 (FTLGLPSAVVFCAALATLIFL).

The protein belongs to the PlsY family. As to quaternary structure, probably interacts with PlsX.

It localises to the cell inner membrane. The enzyme catalyses an acyl phosphate + sn-glycerol 3-phosphate = a 1-acyl-sn-glycero-3-phosphate + phosphate. The protein operates within lipid metabolism; phospholipid metabolism. Catalyzes the transfer of an acyl group from acyl-phosphate (acyl-PO(4)) to glycerol-3-phosphate (G3P) to form lysophosphatidic acid (LPA). This enzyme utilizes acyl-phosphate as fatty acyl donor, but not acyl-CoA or acyl-ACP. This Jannaschia sp. (strain CCS1) protein is Glycerol-3-phosphate acyltransferase.